Consider the following 189-residue polypeptide: Pyridoxal 5'-phosphate synthase subunit PdxT (189 aa).

47–49 contributes to the L-glutamine binding site; the sequence is GES. Cys-79 serves as the catalytic Nucleophile. L-glutamine-binding positions include Arg-106 and 135–136; that span reads IR. Catalysis depends on charge relay system residues His-171 and Glu-173.

Belongs to the glutaminase PdxT/SNO family. In terms of assembly, in the presence of PdxS, forms a dodecamer of heterodimers. Only shows activity in the heterodimer.

It catalyses the reaction aldehydo-D-ribose 5-phosphate + D-glyceraldehyde 3-phosphate + L-glutamine = pyridoxal 5'-phosphate + L-glutamate + phosphate + 3 H2O + H(+). It carries out the reaction L-glutamine + H2O = L-glutamate + NH4(+). It participates in cofactor biosynthesis; pyridoxal 5'-phosphate biosynthesis. Functionally, catalyzes the hydrolysis of glutamine to glutamate and ammonia as part of the biosynthesis of pyridoxal 5'-phosphate. The resulting ammonia molecule is channeled to the active site of PdxS. The polypeptide is Pyridoxal 5'-phosphate synthase subunit PdxT (Desulforudis audaxviator (strain MP104C)).